Here is a 196-residue protein sequence, read N- to C-terminus: Large ribosomal subunit protein bL25 (196 aa).

It belongs to the bacterial ribosomal protein bL25 family. CTC subfamily. Part of the 50S ribosomal subunit; part of the 5S rRNA/L5/L18/L25 subcomplex. Contacts the 5S rRNA. Binds to the 5S rRNA independently of L5 and L18.

Functionally, this is one of the proteins that binds to the 5S RNA in the ribosome where it forms part of the central protuberance. In Amoebophilus asiaticus (strain 5a2), this protein is Large ribosomal subunit protein bL25.